A 197-amino-acid chain; its full sequence is MLSSLAPYMANPRQTLTQVLNFALVLSTAFMLWKGLSVITNSTSPIVVVLSGSMEPAFQRGDLLFLWNRSPRVDVGEIVVYNVRGKDIPIVHRVMRSFPELPGREDKKNVKKGGEEGEETSSTPSQKLLTKGDNNMADDTELYAQGQEYLDRKEDIVGSVRGYVPTVGYVTILLSEHPWLRSVLLGFMGLMVVLQRE.

Residues 1–14 (MLSSLAPYMANPRQ) lie on the Cytoplasmic side of the membrane. A helical; Signal-anchor for type II membrane protein transmembrane segment spans residues 15 to 33 (TLTQVLNFALVLSTAFMLW). Over 34–197 (KGLSVITNST…MGLMVVLQRE (164 aa)) the chain is Lumenal. N41 carries an N-linked (GlcNAc...) asparagine glycan. Catalysis depends on charge relay system residues S53 and H92. Residues 102–115 (PGREDKKNVKKGGE) show a composition bias toward basic and acidic residues. Residues 102–134 (PGREDKKNVKKGGEEGEETSSTPSQKLLTKGDN) form a disordered region. D139 acts as the Charge relay system in catalysis. Positions 183–194 (VLLGFMGLMVVL) are C-terminal short (CTS) helix.

This sequence belongs to the peptidase S26B family. Component of the signal peptidase complex (SPC) composed of a catalytic subunit SEC11 and three accessory subunits SPC1, SPC2 and SPC3. The complex induces a local thinning of the ER membrane which is used to measure the length of the signal peptide (SP) h-region of protein substrates. This ensures the selectivity of the complex towards h-regions shorter than 18-20 amino acids. SPC associates with the translocon complex.

It localises to the endoplasmic reticulum membrane. The catalysed reaction is Cleavage of hydrophobic, N-terminal signal or leader sequences from secreted and periplasmic proteins.. In terms of biological role, catalytic component of the signal peptidase complex (SPC) which catalyzes the cleavage of N-terminal signal sequences from nascent proteins as they are translocated into the lumen of the endoplasmic reticulum. Specifically cleaves N-terminal signal peptides that contain a hydrophobic alpha-helix (h-region) shorter than 18-20 amino acids. This is Signal peptidase complex catalytic subunit SEC11 (SEC11) from Paracoccidioides brasiliensis (strain Pb18).